The chain runs to 85 residues: Cell division topological specificity factor (85 aa).

The protein belongs to the MinE family.

In terms of biological role, prevents the cell division inhibition by proteins MinC and MinD at internal division sites while permitting inhibition at polar sites. This ensures cell division at the proper site by restricting the formation of a division septum at the midpoint of the long axis of the cell. The chain is Cell division topological specificity factor from Shewanella amazonensis (strain ATCC BAA-1098 / SB2B).